The primary structure comprises 957 residues: Calsyntenin-3 (957 aa).

Residues 1–19 (MTPLLFPLLLASLLPSSSC) form the signal peptide. Topologically, residues 20–848 (NKANKHKPWI…SHRNSMVPSA (829 aa)) are extracellular. Cadherin domains lie at 29–145 (IEAE…APVF) and 146–246 (VERL…KPSW). N-linked (GlcNAc...) asparagine glycans are attached at residues Asn299, Asn347, and Asn508. A helical transmembrane segment spans residues 849–869 (ATLIIVVCVGFLVLMVVLGLV). Topologically, residues 870–957 (RIHSLHRRVS…RIIETPPHRY (88 aa)) are cytoplasmic. Residues 919–957 (CVAGAAGGQQDDEDSSDSEAADSPSSDERRIIETPPHRY) form a disordered region. The segment covering 928–938 (QDDEDSSDSEA) has biased composition (acidic residues). Residues 944–957 (SDERRIIETPPHRY) are compositionally biased toward basic and acidic residues.

The protein belongs to the calsyntenin family. In terms of assembly, interacts (via cadherin domains) with both alpha and beta isoforms of neurexins (NRXN1, NRXN2 and NRXN3). Directly interacts with APBA2. Forms a tripartite complex with APBA2 and APP. Interacts with low affinity with KLC1. Interacts with SLC23A2/SVCT2. In terms of processing, proteolytically processed under normal cellular conditions. A primary zeta-cleavage generates a large extracellular (soluble) N-terminal domain (sAlc) and a short C-terminal transmembrane fragment (CTF1). A secondary cleavage catalyzed by gamma-secretase within the transmembrane domain releases the beta-Alc-beta chain in the extracellular milieu and produces an intracellular fragment (AlcICD). This processing is strongly suppressed in the tripartite complex formed with APBA2 and APP, which seems to prevent the association with gamma-secretase.

Its subcellular location is the postsynaptic cell membrane. The protein resides in the endoplasmic reticulum membrane. It localises to the golgi apparatus membrane. It is found in the cell projection. The protein localises to the dendrite. In terms of biological role, postsynaptic adhesion molecule that binds to presynaptic neurexins to mediate both excitatory and inhibitory synapse formation. Promotes synapse development by acting as a cell adhesion molecule at the postsynaptic membrane, which associates with both neurexin-alpha and neurexin-beta proteins at the presynaptic membrane. Regulates the balance between excitatory and inhibitory synapses by inhibiting formation of excitatory parallel-fiber synapses and promoting formation of inhibitory synapses in the same neuron. May also be involved in ascorbate (vitamin C) uptake via its interaction with SLC23A2/SVCT2. Complex formation with APBA2 and APP, stabilizes APP metabolism and enhances APBA2-mediated suppression of beta-APP40 secretion, due to the retardation of intracellular APP maturation. In Bos taurus (Bovine), this protein is Calsyntenin-3 (CLSTN3).